The following is a 416-amino-acid chain: Phosphoglycerate kinase (416 aa).

An N-acetylserine modification is found at serine 2. (2R)-3-phosphoglycerate is bound by residues valine 23, aspartate 24, phenylalanine 25, asparagine 26, glutamine 38, arginine 39, serine 62, histidine 63, glycine 65, and arginine 66. Residue lysine 82 forms a Glycyl lysine isopeptide (Lys-Gly) (interchain with G-Cter in ubiquitin) linkage. Threonine 93 carries the phosphothreonine modification. Serine 110 is subject to Phosphoserine. (2R)-3-phosphoglycerate contacts are provided by leucine 121 and arginine 122. 2 positions are modified to phosphoserine: serine 130 and serine 154. (2R)-3-phosphoglycerate is bound by residues histidine 168 and arginine 169. At serine 172 the chain carries Phosphoserine. Lysine 197 is covalently cross-linked (Glycyl lysine isopeptide (Lys-Gly) (interchain with G-Cter in ubiquitin)). A Phosphothreonine modification is found at threonine 203. Residue glycine 212 participates in ADP binding. Position 212 (glycine 212) interacts with CDP. Residues alanine 213 and lysine 214 each contribute to the AMP site. Alanine 213 and lysine 214 together coordinate ATP. A Mg(2+)-binding site is contributed by alanine 213. Residues alanine 216 and aspartate 217 each contribute to the Mg(2+) site. Residue aspartate 217 coordinates CDP. Lysine 218 serves as a coordination point for AMP. Lysine 218 lines the ATP pocket. Glycine 236 is an ADP binding site. Glycine 236 provides a ligand contact to CDP. Glycine 237 is an AMP binding site. Glycine 237 contacts ATP. Threonine 241 is subject to Phosphothreonine. Glycyl lysine isopeptide (Lys-Gly) (interchain with G-Cter in ubiquitin) cross-links involve residues lysine 258 and lysine 274. Threonine 298 carries the phosphothreonine modification. Lysine 302 is covalently cross-linked (Glycyl lysine isopeptide (Lys-Gly) (interchain with G-Cter in ubiquitin)). Residue glycine 311 participates in AMP binding. Positions 311 and 312 each coordinate ATP. At serine 318 the chain carries Phosphoserine. Residue threonine 331 is modified to Phosphothreonine. Asparagine 335 provides a ligand contact to ATP. Positions 336 and 341 each coordinate CDP. Residue phenylalanine 341 coordinates ADP. Glutamate 342 provides a ligand contact to AMP. Glutamate 342 contributes to the ATP binding site. Glycine 371 is a binding site for (2R)-3-phosphoglycerate. ATP is bound by residues aspartate 373 and threonine 374. Aspartate 373 is a Mg(2+) binding site. Phosphothreonine is present on threonine 392. Residues glycine 394 and glycine 395 each contribute to the (2R)-3-phosphoglycerate site.

The protein belongs to the phosphoglycerate kinase family. Monomer. Requires Mg(2+) as cofactor.

Its subcellular location is the cytoplasm. The protein localises to the mitochondrion. The enzyme catalyses (2R)-3-phosphoglycerate + ATP = (2R)-3-phospho-glyceroyl phosphate + ADP. The protein operates within carbohydrate degradation; glycolysis; pyruvate from D-glyceraldehyde 3-phosphate: step 2/5. Catalyzes one of the two ATP producing reactions in the glycolytic pathway via the reversible conversion of 1,3-diphosphoglycerate to 3-phosphoglycerate. Both L- and D- forms of purine and pyrimidine nucleotides can be used as substrates, but the activity is much lower on pyrimidines. Negatively regulates the biosynthesis of acetyl-CoA from pyruvate in the mitochondrion. The chain is Phosphoglycerate kinase (PGK1) from Saccharomyces cerevisiae (strain ATCC 204508 / S288c) (Baker's yeast).